Consider the following 428-residue polypeptide: MSAEIMKKEDNKITLKIVVGADQFEVAINKAYNKMKSSFNIPGFRKGKVPRKLVEQRYGVEVFFEDAMNIVLPDAYEGALQELNIDPIDRPEFDFGEIKKGEDVEFTAEVQVMPEFTVEGYKGIEVEKNEYNVQEEDVQNELNKLTEQNARMIAVEDRPVQDGDMVVIDYKGFVGEDQFEGGTAEKQSLTIGSNQFIPGFEEQLIGASIGDEIKVKVTFPEEYHSEELAGKEATFEVMVHEIKEKELPALDDEFAKDVSEFDTLAELKADLSTKLEESAKKRTEQEYRNNVIEAVANQVELEIPNAVIERQINNMLLDFDYQLKYQGMTLESYYQMTGTKEEDLRGQMREDAEKRAKQQLVLDRISEMEKIEATETDVSEELERMATQYKQELDKLKSNLRDQDYTSIKEGIIVRKTIDLLAENAKVS.

Residues 163-248 (GDMVVIDYKG…VHEIKEKELP (86 aa)) enclose the PPIase FKBP-type domain.

It belongs to the FKBP-type PPIase family. Tig subfamily.

The protein localises to the cytoplasm. It catalyses the reaction [protein]-peptidylproline (omega=180) = [protein]-peptidylproline (omega=0). In terms of biological role, involved in protein export. Acts as a chaperone by maintaining the newly synthesized protein in an open conformation. Functions as a peptidyl-prolyl cis-trans isomerase. In Alkaliphilus metalliredigens (strain QYMF), this protein is Trigger factor.